Here is an 80-residue protein sequence, read N- to C-terminus: U4-theraphotoxin-Spl1a (80 aa).

The N-terminal stretch at 1 to 21 is a signal peptide; it reads MKASLFAVIFGLVVLCACSFA. The propeptide occupies 22 to 50; it reads EDQFASPNELLKSMFVESTHELTPEVEGR. Intrachain disulfides connect Cys-52–Cys-66, Cys-59–Cys-71, and Cys-65–Cys-75. Residue Leu-79 is modified to Leucine amide.

The protein belongs to the neurotoxin 30 (phrixotoxin) family. In terms of tissue distribution, expressed by the venom gland.

Its subcellular location is the secreted. Its function is as follows. Probable ion channel inhibitor. Shows insecticidal activity when injected into mealworms. In Selenotypus plumipes (Australian featherleg tarantula), this protein is U4-theraphotoxin-Spl1a.